A 288-amino-acid polypeptide reads, in one-letter code: uncharacterized protein (288 aa).

Basic and acidic residues predominate over residues 1–12 (MTEGRCAQHPDG). The interval 1–20 (MTEGRCAQHPDGLDVQDVCD) is disordered.

This sequence belongs to the class IV-like SAM-binding methyltransferase superfamily. RNA methyltransferase TrmH family.

This is an uncharacterized protein from Mycobacterium tuberculosis (strain ATCC 25618 / H37Rv).